The chain runs to 1522 residues: Rho guanine nucleotide exchange factor 11 (1522 aa).

Residues 1-40 (MSVRLPQSIDRLSSLSSLGDSAPERKSPSHHRQPSDASET) are disordered. Phosphoserine is present on residues Ser-2, Ser-14, Ser-16, and Ser-35. The 80-residue stretch at 47–126 (CVIIQKDQHG…LTLLGSSPSS (80 aa)) folds into the PDZ domain. Disordered stretches follow at residues 128–175 (GISG…PEVQ) and 200–231 (YGDTSQRPSEGRLSLDSQEGDSGLDSGTERFP). The span at 149-161 (PSPPPPPPLPPPQ) shows a compositional bias: pro residues. Phosphoserine is present on residues Ser-245 and Ser-251. Thr-254 carries the phosphothreonine modification. Phosphoserine is present on residues Ser-255 and Ser-271. A disordered region spans residues 263–286 (AQHHRRQGSDAAVPSTGDQGVDQS). The RGSL domain maps to 306 to 486 (ESDIIFQDLE…NTYMSHAGIR (181 aa)). The stretch at 444–470 (LRERQVAEKQLAALGDILSKYEEDRSA) forms a coiled coil. The interval 490-555 (ARPSNTAEKA…SSQSTFHIPL (66 aa)) is disordered. Residues 521–533 (SKKEKDALEDKKR) are compositionally biased toward basic and acidic residues. 3 positions are modified to phosphoserine: Ser-556, Ser-635, and Ser-663. Positions 573–680 (ENNQQYDAPE…FTPKMGRRSI (108 aa)) are disordered. Residues 601 to 637 (DSSRSEIRLGRSESLKGREEMKRSRKAENVPRSRSDV) show a composition bias toward basic and acidic residues. Low complexity predominate over residues 651–664 (SASSSTSSLSTRSL). A phosphothreonine mark is found at Thr-668 and Thr-672. Positions 734-923 (DRQEVINELF…REILKYVNEA (190 aa)) constitute a DH domain. The PH domain maps to 965–1079 (KMIHEGPLTW…WMELLEEAVR (115 aa)). The disordered stretch occupies residues 1084–1141 (HPGAAPMPVHPPPPGPREPAQQGPTPSRVELDDSDVFHGEPEPEELPGGTGSQQRVQG). A compositionally biased stretch (pro residues) spans 1091–1100 (PVHPPPPGPR). Residues 1112 to 1124 (VELDDSDVFHGEP) are compositionally biased toward basic and acidic residues. Position 1155 is a phosphoserine (Ser-1155). Disordered regions lie at residues 1223–1320 (ETQA…AGGY), 1332–1423 (KVVP…RDVG), and 1453–1522 (LGGE…SPGP). Residues 1236-1245 (PTPSVISVTS) are compositionally biased toward polar residues. Ser-1295 and Ser-1300 each carry phosphoserine. A compositionally biased stretch (low complexity) spans 1338-1353 (PESGQSEPGPPEVEGG). Phosphoserine occurs at positions 1457 and 1458. Thr-1462 and Thr-1475 each carry phosphothreonine. Ser-1480 is modified (phosphoserine). The segment covering 1503 to 1513 (DGSDAPLEDST) has biased composition (acidic residues).

Interacts with GNA12 and GNA13 through the RGS domain. Interacts with RHOA, PLXNB1 and PLXNB2. Interacts with SLC1A6. Interacts (via DH domain) with GCSAM (via C-terminus). Found in a complex with ARHGEF11 and ARHGEF12; binding to ARHGEF11 and ARHGEF12 enhances CDC42 GEF activity of PLEKHG4B, and PLEKHG4B, in turn, inhibits ARHGEF11- and ARHGEF12-mediated RHOA activation. In terms of processing, phosphorylated by MAP kinase p38 (MAPK11, MAPK12, MAPK13 and/or MAPK14). Post-translationally, ubiquitinated by the BCR(KLHL20) E3 ubiquitin ligase complex when previously phosphorylated by MAP kinase p38 (MAPK11, MAPK12, MAPK13 and/or MAPK14), leading to its degradation, thereby restricting RhoA activity and facilitating growth cone spreading and neurite outgrowth. Ubiquitously expressed.

It is found in the cytoplasm. It localises to the membrane. In terms of biological role, may play a role in the regulation of RhoA GTPase by guanine nucleotide-binding alpha-12 (GNA12) and alpha-13 (GNA13). Acts as guanine nucleotide exchange factor (GEF) for RhoA GTPase and may act as GTPase-activating protein (GAP) for GNA12 and GNA13. Involved in neurotrophin-induced neurite outgrowth. This Homo sapiens (Human) protein is Rho guanine nucleotide exchange factor 11 (ARHGEF11).